The sequence spans 192 residues: ATP-dependent Clp protease proteolytic subunit 1 (192 aa).

Ser92 (nucleophile) is an active-site residue. The active site involves His117.

This sequence belongs to the peptidase S14 family. In terms of assembly, fourteen ClpP subunits assemble into 2 heptameric rings which stack back to back to give a disk-like structure with a central cavity, resembling the structure of eukaryotic proteasomes.

The protein localises to the cytoplasm. It carries out the reaction Hydrolysis of proteins to small peptides in the presence of ATP and magnesium. alpha-casein is the usual test substrate. In the absence of ATP, only oligopeptides shorter than five residues are hydrolyzed (such as succinyl-Leu-Tyr-|-NHMec, and Leu-Tyr-Leu-|-Tyr-Trp, in which cleavage of the -Tyr-|-Leu- and -Tyr-|-Trp bonds also occurs).. In terms of biological role, cleaves peptides in various proteins in a process that requires ATP hydrolysis. Has a chymotrypsin-like activity. Plays a major role in the degradation of misfolded proteins. The polypeptide is ATP-dependent Clp protease proteolytic subunit 1 (Chlamydia trachomatis serovar D (strain ATCC VR-885 / DSM 19411 / UW-3/Cx)).